A 298-amino-acid polypeptide reads, in one-letter code: 3'-5' exonuclease crn-4 (298 aa).

The Exonuclease domain maps to 12–192 (LILDFETTSD…DDCLNIATIL (181 aa)). Mg(2+) contacts are provided by D15, E17, and D184. Positions 210, 260, 263, and 270 each coordinate Zn(2+).

In terms of assembly, homodimer (via C-terminus). Interacts with crn-5; interaction promotes the DNase activity of crn-4. Interacts with cps-6, crn-1 and cyn-13. The cofactor is Mg(2+).

Exonuclease activity is inhibited in vitro by pontacyl violet 6R (PV6R), p-chloromercuriphenyl sulfonate (PCMPS), 5,5'-dithiobis(2-nitrobenzoic acid) (DTNB), aurintricarboxylic acid (ATA), 2-morpholin-4-ylethanesulfonate (MES), 4-[(4,6-dichloro-1,3,5-triazin-2-yl)amino]-2-(3-hydroxy-6-oxoxanthen-9-yl)benzoic acid (DR396) and fmoc-d-Cha-OH (FDCO). Interaction with ssRNA is reduced in vitro by PV6R. In terms of biological role, possesses 3'-&gt;5' exoribonuclease activity in digestion of DNA and RNA. Cleaves nucleic acid substrates with efficiencies in the following order: single-stranded RNA (ssRNA) &gt; double-stranded DNA (dsDNA) &gt; single-stranded DNA (ssDNA). Involved in apoptotic DNA degradation. The chain is 3'-5' exonuclease crn-4 (crn-4) from Caenorhabditis elegans.